The primary structure comprises 272 residues: Outer surface protein A (272 aa).

The signal sequence occupies residues 1 to 16 (MKKYLLGIGLILALIA). The N-palmitoyl cysteine moiety is linked to residue cysteine 17. The S-diacylglycerol cysteine moiety is linked to residue cysteine 17.

The protein belongs to the OspA lipoprotein family.

The protein resides in the cell outer membrane. The protein localises to the cell surface. In Borreliella burgdorferi (Lyme disease spirochete), this protein is Outer surface protein A.